The sequence spans 152 residues: Small ribosomal subunit protein uS15 (152 aa).

Over residues 1–10 the composition is skewed to basic residues; that stretch reads MAKMHTRTKG. The tract at residues 1–26 is disordered; the sequence is MAKMHTRTKGKSGSTKPIRSESPAWS. Residues 11-26 show a composition bias toward polar residues; sequence KSGSTKPIRSESPAWS.

The protein belongs to the universal ribosomal protein uS15 family. As to quaternary structure, part of the 30S ribosomal subunit.

This Methanococcoides burtonii (strain DSM 6242 / NBRC 107633 / OCM 468 / ACE-M) protein is Small ribosomal subunit protein uS15.